Here is a 123-residue protein sequence, read N- to C-terminus: Small ribosomal subunit protein uS13 (123 aa).

The segment at 97–123 (PVRGQRTKTNARTRKGPRKTVGVRRKK) is disordered.

The protein belongs to the universal ribosomal protein uS13 family. As to quaternary structure, part of the 30S ribosomal subunit. Forms a loose heterodimer with protein S19. Forms two bridges to the 50S subunit in the 70S ribosome.

In terms of biological role, located at the top of the head of the 30S subunit, it contacts several helices of the 16S rRNA. In the 70S ribosome it contacts the 23S rRNA (bridge B1a) and protein L5 of the 50S subunit (bridge B1b), connecting the 2 subunits; these bridges are implicated in subunit movement. Contacts the tRNAs in the A and P-sites. This is Small ribosomal subunit protein uS13 from Pelotomaculum thermopropionicum (strain DSM 13744 / JCM 10971 / SI).